Here is a 316-residue protein sequence, read N- to C-terminus: METWQELKVTVKREGEELVSNLLIELGAQGVAIEDSMDYVGNVDRFGEIFPEVEQQEEIVVTAYYPDTVDVTVVEADLQARISELTDFMDLGELKIGTTALAEEDWADNWKKYYEPARITHDLTIVPSWTDYEATAGEKIIKLDPGMAFGTGTHPTTKMSIFALEQVLRGGETVLDVGTGSGVLSIASSLLGAKEIFAYDLDDVAVRVAQENIELNPGMENIHVAAGDLLKGVEIEADVIVANILADILIHLTEDAYRLVKDEGYLIMSGIIKDKWDMVRELAESAGFFLETHMVQGEWNACVFKKTKDISGVIGG.

The S-adenosyl-L-methionine site is built by Thr157, Gly178, Asp200, and Asn243.

Belongs to the methyltransferase superfamily. PrmA family.

It localises to the cytoplasm. The catalysed reaction is L-lysyl-[protein] + 3 S-adenosyl-L-methionine = N(6),N(6),N(6)-trimethyl-L-lysyl-[protein] + 3 S-adenosyl-L-homocysteine + 3 H(+). Functionally, methylates ribosomal protein L11. The polypeptide is Ribosomal protein L11 methyltransferase (Streptococcus pneumoniae (strain P1031)).